A 256-amino-acid chain; its full sequence is Trans-aconitate 2-methyltransferase (256 aa).

The protein belongs to the methyltransferase superfamily. Tam family.

It localises to the cytoplasm. The enzyme catalyses trans-aconitate + S-adenosyl-L-methionine = (E)-3-(methoxycarbonyl)pent-2-enedioate + S-adenosyl-L-homocysteine. Its function is as follows. Catalyzes the S-adenosylmethionine monomethyl esterification of trans-aconitate. This chain is Trans-aconitate 2-methyltransferase, found in Rhizobium leguminosarum bv. trifolii (strain WSM2304).